The chain runs to 80 residues: HssA/B-like protein 2 (80 aa).

The interval 1 to 29 (MSLLSALTSISKPMNTSSKSSVSSKNVSG) is disordered. Over residues 9-29 (SISKPMNTSSKSSVSSKNVSG) the composition is skewed to low complexity.

The protein belongs to the hssA/B family.

The polypeptide is HssA/B-like protein 2 (hssl2) (Dictyostelium discoideum (Social amoeba)).